The following is a 441-amino-acid chain: Deoxyguanosinetriphosphate triphosphohydrolase-like protein (441 aa).

Residues 59–250 enclose the HD domain; sequence RLTHSLEVSQ…MELADDTAYA (192 aa).

It belongs to the dGTPase family. Type 2 subfamily.

The polypeptide is Deoxyguanosinetriphosphate triphosphohydrolase-like protein (Shewanella loihica (strain ATCC BAA-1088 / PV-4)).